The chain runs to 690 residues: DNA ligase (690 aa).

NAD(+)-binding positions include 36–40 (DAVYD), 85–86 (SL), and glutamate 124. Lysine 126 functions as the N6-AMP-lysine intermediate in the catalytic mechanism. The NAD(+) site is built by arginine 147, glutamate 184, lysine 308, and lysine 332. Residues cysteine 426, cysteine 429, cysteine 444, and cysteine 449 each contribute to the Zn(2+) site. The BRCT domain maps to 614–690 (NQSNVFDGKS…INENELKLLL (77 aa)).

The protein belongs to the NAD-dependent DNA ligase family. LigA subfamily. The cofactor is Mg(2+). It depends on Mn(2+) as a cofactor.

The enzyme catalyses NAD(+) + (deoxyribonucleotide)n-3'-hydroxyl + 5'-phospho-(deoxyribonucleotide)m = (deoxyribonucleotide)n+m + AMP + beta-nicotinamide D-nucleotide.. Its function is as follows. DNA ligase that catalyzes the formation of phosphodiester linkages between 5'-phosphoryl and 3'-hydroxyl groups in double-stranded DNA using NAD as a coenzyme and as the energy source for the reaction. It is essential for DNA replication and repair of damaged DNA. The polypeptide is DNA ligase (Prochlorococcus marinus (strain NATL1A)).